Here is a 279-residue protein sequence, read N- to C-terminus: Bifunctional protein FolD (279 aa).

NADP(+)-binding positions include 165 to 167 (GRS), Ser190, and Ile231.

It belongs to the tetrahydrofolate dehydrogenase/cyclohydrolase family. Homodimer.

It catalyses the reaction (6R)-5,10-methylene-5,6,7,8-tetrahydrofolate + NADP(+) = (6R)-5,10-methenyltetrahydrofolate + NADPH. The enzyme catalyses (6R)-5,10-methenyltetrahydrofolate + H2O = (6R)-10-formyltetrahydrofolate + H(+). It functions in the pathway one-carbon metabolism; tetrahydrofolate interconversion. In terms of biological role, catalyzes the oxidation of 5,10-methylenetetrahydrofolate to 5,10-methenyltetrahydrofolate and then the hydrolysis of 5,10-methenyltetrahydrofolate to 10-formyltetrahydrofolate. The protein is Bifunctional protein FolD of Halalkalibacterium halodurans (strain ATCC BAA-125 / DSM 18197 / FERM 7344 / JCM 9153 / C-125) (Bacillus halodurans).